Consider the following 208-residue polypeptide: Type 4 adapter protein LvgA (208 aa).

The T4BSS is a complex nanomachine composed of several subcomplexes. This subunit is part of the Type IV Coupling Complex (T4CC), a subcomplex composed of the DotLMNYZ core and the IcmSW-LvgA adapter subunits, linked by the C-terminal tail of DotL. Interacts with DotL, IcmS and IcmW. Interacts with various effector proteins, including VpdB, SetA, PieA and SidH.

The protein localises to the cytoplasm. In terms of biological role, component of the Dot/Icm type IVB secretion system (T4BSS), which is used to inject bacterial effector proteins into eukaryotic host cells. Part of a subcomplex which recruits effector proteins and delivers them to the core transmembrane subcomplex. Is a critical subunit for binding a subset of effector proteins. Recognizes more than one type of binding motif. May be a critical factor that confers host specificity. This Legionella pneumophila subsp. pneumophila (strain Philadelphia 1 / ATCC 33152 / DSM 7513) protein is Type 4 adapter protein LvgA.